The following is a 161-amino-acid chain: MLNRKNKENIISKINKITKSSLSILIVDPTGITSNQMNNLRKSSRKLNVNIKQVRNTLMRFAIVDTEFDCLEKYIKGSNLIAFSHSHPGSAARIFKNFTKENNKIKIKLAVFERKIITDSNIDYLANLPTHEESVINFINIIQEASIKKLIRILILINNNK.

This sequence belongs to the universal ribosomal protein uL10 family. In terms of assembly, part of the ribosomal stalk of the 50S ribosomal subunit. The N-terminus interacts with L11 and the large rRNA to form the base of the stalk. The C-terminus forms an elongated spine to which L12 dimers bind in a sequential fashion forming a multimeric L10(L12)X complex.

In terms of biological role, forms part of the ribosomal stalk, playing a central role in the interaction of the ribosome with GTP-bound translation factors. This Wigglesworthia glossinidia brevipalpis protein is Large ribosomal subunit protein uL10 (rplJ).